The following is a 204-amino-acid chain: Proteasome subunit beta (204 aa).

A propeptide spans 1-8 (removed in mature form; by autocatalysis); the sequence is MDDKILEG. The active-site Nucleophile is T9.

The protein belongs to the peptidase T1B family. In terms of assembly, the 20S proteasome core is composed of 14 alpha and 14 beta subunits that assemble into four stacked heptameric rings, resulting in a barrel-shaped structure. The two inner rings, each composed of seven catalytic beta subunits, are sandwiched by two outer rings, each composed of seven alpha subunits. The catalytic chamber with the active sites is on the inside of the barrel. Has a gated structure, the ends of the cylinder being occluded by the N-termini of the alpha-subunits. Is capped at one or both ends by the proteasome regulatory ATPase, PAN.

Its subcellular location is the cytoplasm. It carries out the reaction Cleavage of peptide bonds with very broad specificity.. With respect to regulation, the formation of the proteasomal ATPase PAN-20S proteasome complex, via the docking of the C-termini of PAN into the intersubunit pockets in the alpha-rings, triggers opening of the gate for substrate entry. Interconversion between the open-gate and close-gate conformations leads to a dynamic regulation of the 20S proteasome proteolysis activity. Its function is as follows. Component of the proteasome core, a large protease complex with broad specificity involved in protein degradation. The chain is Proteasome subunit beta from Methanobrevibacter smithii (strain ATCC 35061 / DSM 861 / OCM 144 / PS).